A 114-amino-acid polypeptide reads, in one-letter code: T cell receptor beta variable 10-2 (114 aa).

Residues 1–21 (MGTRLFFYVALCLLWAGHRDA) form the signal peptide. The 93-residue stretch at 22-114 (GITQSPRYKI…TSVYFCASSE (93 aa)) folds into the Ig-like domain. An intrachain disulfide couples C42 to C110.

In terms of assembly, alpha-beta TR is a heterodimer composed of an alpha and beta chain; disulfide-linked. The alpha-beta TR is associated with the transmembrane signaling CD3 coreceptor proteins to form the TR-CD3 (TcR or TCR). The assembly of alpha-beta TR heterodimers with CD3 occurs in the endoplasmic reticulum where a single alpha-beta TR heterodimer associates with one CD3D-CD3E heterodimer, one CD3G-CD3E heterodimer and one CD247 homodimer forming a stable octameric structure. CD3D-CD3E and CD3G-CD3E heterodimers preferentially associate with TR alpha and TR beta chains, respectively. The association of the CD247 homodimer is the last step of TcR assembly in the endoplasmic reticulum and is required for transport to the cell surface.

The protein localises to the cell membrane. Its function is as follows. V region of the variable domain of T cell receptor (TR) beta chain that participates in the antigen recognition. Alpha-beta T cell receptors are antigen specific receptors which are essential to the immune response and are present on the cell surface of T lymphocytes. Recognize peptide-major histocompatibility (MH) (pMH) complexes that are displayed by antigen presenting cells (APC), a prerequisite for efficient T cell adaptive immunity against pathogens. Binding of alpha-beta TR to pMH complex initiates TR-CD3 clustering on the cell surface and intracellular activation of LCK that phosphorylates the ITAM motifs of CD3G, CD3D, CD3E and CD247 enabling the recruitment of ZAP70. In turn ZAP70 phosphorylates LAT, which recruits numerous signaling molecules to form the LAT signalosome. The LAT signalosome propagates signal branching to three major signaling pathways, the calcium, the mitogen-activated protein kinase (MAPK) kinase and the nuclear factor NF-kappa-B (NF-kB) pathways, leading to the mobilization of transcription factors that are critical for gene expression and essential for T cell growth and differentiation. The T cell repertoire is generated in the thymus, by V-(D)-J rearrangement. This repertoire is then shaped by intrathymic selection events to generate a peripheral T cell pool of self-MH restricted, non-autoaggressive T cells. Post-thymic interaction of alpha-beta TR with the pMH complexes shapes TR structural and functional avidity. This is T cell receptor beta variable 10-2 from Homo sapiens (Human).